The following is a 1048-amino-acid chain: 3-hydroxy-3-methylglutaryl-coenzyme A reductase (1048 aa).

Topologically, residues 1-32 are cytoplasmic; it reads MDPVVKKPSPGGVQHRVTKGLRAIVGHACRHP. A helical transmembrane segment spans residues 33-53; that stretch reads IHTLLVTALTAATTHLHVLEG. Topologically, residues 54 to 220 are lumenal; sequence TYQAAHRGLA…FLHRVKHAET (167 aa). The helical transmembrane segment at 221–241 threads the bilayer; sequence VDLVIIGLSYLAMNMTVVSLF. An SSD domain is found at 222–403; the sequence is DLVIIGLSYL…FTFYATILCV (182 aa). The Cytoplasmic segment spans residues 242–250; sequence RVMRQLGSR. A helical transmembrane segment spans residues 251 to 271; the sequence is FWLATSVLLSGAFAFVLGLGI. The Lumenal segment spans residues 272–276; sequence TTTCD. A helical membrane pass occupies residues 277-297; that stretch reads VPVDMLLLFEGIPYLVLTVGF. At 298–348 the chain is on the cytoplasmic side; sequence EKPIQLTRAVLCVSEELRGGWQRPVPNGASSDDSRQSQLIPNIIQLAVDRE. A helical membrane pass occupies residues 349-369; sequence GWYIVRSYLLEIGALALGAVL. The Lumenal portion of the chain corresponds to 370–377; sequence RPNDSLGH. Asparagine 372 carries N-linked (GlcNAc...) asparagine glycosylation. The helical transmembrane segment at 378–398 threads the bilayer; the sequence is FCFLAAWTLLIDAILLFTFYA. Topologically, residues 399–439 are cytoplasmic; that stretch reads TILCVKLEITRIRSPGGLGQVNAKHPSGIFGHKVKSTNITW. The helical transmembrane segment at 440-460 threads the bilayer; sequence WKLLTVGGFVLCHFLQLSPFF. Topologically, residues 461–542 are lumenal; that stretch reads YRVMGEYMAN…LDGLESPLGR (82 aa). N-linked (GlcNAc...) asparagine glycans are attached at residues asparagine 470 and asparagine 520. A helical transmembrane segment spans residues 543-563; that stretch reads LCLMGALVVSLVLNNHLIHAA. Over 564-1048 the chain is Cytoplasmic; it reads RWHAWPQARE…NRSAGATVKK (485 aa). Catalysis depends on glutamate 729, which acts as the Charge relay system. Residue 735 to 741 coordinates CoA; the sequence is SASRGCK. Residues 796–798 and 823–831 each bind NADP(+); these read SRF and DAMGMNMIS. Lysine 863 functions as the Charge relay system in the catalytic mechanism. 892-894 is a CoA binding site; the sequence is VLK. The active-site Charge relay system is the aspartate 939. 1034-1035 provides a ligand contact to CoA; sequence AH. Histidine 1035 functions as the Proton donor in the catalytic mechanism. 1039–1040 provides a ligand contact to NADP(+); sequence NR.

Belongs to the HMG-CoA reductase family.

It is found in the endoplasmic reticulum membrane. It catalyses the reaction (R)-mevalonate + 2 NADP(+) + CoA = (3S)-3-hydroxy-3-methylglutaryl-CoA + 2 NADPH + 2 H(+). The protein operates within metabolic intermediate biosynthesis; (R)-mevalonate biosynthesis; (R)-mevalonate from acetyl-CoA: step 3/3. Functionally, HMG-CoA reductase; part of the first module of ergosterol biosynthesis pathway that includes the early steps of the pathway, conserved across all eukaryotes, and which results in the formation of mevalonate from acetyl-coenzyme A (acetyl-CoA). In this module, the cytosolic acetyl-CoA acetyltransferase catalyzes the formation of acetoacetyl-CoA. The hydroxymethylglutaryl-CoA synthase then condenses acetyl-CoA with acetoacetyl-CoA to form HMG-CoA. The rate-limiting step of the early module is the reduction to mevalonate by the 3-hydroxy-3-methylglutaryl-coenzyme A (HMG-CoA) reductase. This is 3-hydroxy-3-methylglutaryl-coenzyme A reductase from Aspergillus terreus (strain NIH 2624 / FGSC A1156).